Reading from the N-terminus, the 641-residue chain is Chaperone protein DnaK (641 aa).

Position 199 is a phosphothreonine; by autocatalysis (threonine 199). Basic and acidic residues predominate over residues 577–590; the sequence is KGDNKDEIETRTQK. The tract at residues 577-641 is disordered; the sequence is KGDNKDEIET…EFEEVDDKKK (65 aa). Residues 617-626 show a composition bias toward low complexity; sequence GAEQASAQQD. The span at 627 to 641 shows a compositional bias: acidic residues; sequence DVVDAEFEEVDDKKK.

Belongs to the heat shock protein 70 family.

Functionally, acts as a chaperone. In Thioalkalivibrio sulfidiphilus (strain HL-EbGR7), this protein is Chaperone protein DnaK.